The chain runs to 201 residues: Large ribosomal subunit protein uL4 (201 aa).

The interval 44–71 (RAQKTRAEVTGSGKKPWRQKGTGRARSG) is disordered.

The protein belongs to the universal ribosomal protein uL4 family. As to quaternary structure, part of the 50S ribosomal subunit.

In terms of biological role, one of the primary rRNA binding proteins, this protein initially binds near the 5'-end of the 23S rRNA. It is important during the early stages of 50S assembly. It makes multiple contacts with different domains of the 23S rRNA in the assembled 50S subunit and ribosome. Functionally, forms part of the polypeptide exit tunnel. The sequence is that of Large ribosomal subunit protein uL4 from Escherichia fergusonii (strain ATCC 35469 / DSM 13698 / CCUG 18766 / IAM 14443 / JCM 21226 / LMG 7866 / NBRC 102419 / NCTC 12128 / CDC 0568-73).